The primary structure comprises 458 residues: Type III intermediate filament (458 aa).

Residues methionine 1–glutamate 100 are head. The 309-residue stretch at glutamate 97 to isoleucine 405 folds into the IF rod domain. Positions serine 406–aspartate 458 are tail.

It belongs to the intermediate filament family.

The protein is Type III intermediate filament of Tetronarce californica (Pacific electric ray).